We begin with the raw amino-acid sequence, 1087 residues long: Apoptosis-stimulating of p53 protein 1 (1087 aa).

The segment at 82 to 122 (HEDSPTESSEQGARQTQEQRTQRSVVNVPGEKRTENGVGNP) is disordered. The segment covering 87–106 (TESSEQGARQTQEQRTQRSV) has biased composition (polar residues). A phosphoserine mark is found at S332 and S335. 3 disordered regions span residues 374 to 415 (SSAA…GMEG), 442 to 721 (IGKG…PNIQ), and 734 to 878 (GMEG…TGHG). Over residues 393 to 405 (KQNSASVKSTQMT) the composition is skewed to polar residues. Pro residues predominate over residues 445–458 (GPPPIPGVGKPLPP). Positions 459 to 476 (SYGTYPSSGPLGPGSTSS) are enriched in low complexity. Polar residues predominate over residues 506 to 520 (NAPQPGSSQQIQQRI). Positions 523-536 (PPSPTYPPAGPPAF) are enriched in pro residues. R552 bears the Asymmetric dimethylarginine mark. Over residues 570–589 (QTVNSSSIYSMYLQQATPPK) the composition is skewed to polar residues. Over residues 610–625 (PVLPSGSASPSPLPFL) the composition is skewed to low complexity. Residues S679 and S708 each carry the phosphoserine modification. The segment covering 805 to 831 (PQTTHQTAEPTEDNNNNVAPVPSTEQI) has biased composition (polar residues). ANK repeat units follow at residues 917-949 (EGIT…AADS) and 950-982 (DGWT…ASTI). An SH3 domain is found at 1016 to 1078 (MNKGTVYALW…PKNLLGLYPR (63 aa)).

Belongs to the ASPP family. Interacts with P53/TP53; the interaction promotes pro-apoptotic activity.

It localises to the cytoplasm. The protein localises to the nucleus. Functionally, regulator that plays a central role in regulation of apoptosis via its interaction with p53/TP53. Regulates TP53 by enhancing the DNA binding and transactivation function of TP53 on the promoters of proapoptotic genes in vivo. This is Apoptosis-stimulating of p53 protein 1 (Ppp1r13b) from Mus musculus (Mouse).